The chain runs to 589 residues: Ectoderm-neural cortex protein 1 (589 aa).

Residues 46–114 (TDVLLHAGNR…AYSSRVIINE (69 aa)) enclose the BTB domain. 6 Kelch repeats span residues 296–340 (ALFL…AIGC), 341–388 (KVYI…ELKH), 389–444 (CLYV…SAKL), 446–492 (LFAF…VLGN), 494–538 (IFIM…ASGN), and 539–585 (KLYV…STWK).

As to quaternary structure, binds to RB1. Hypophosphorylated RB1 associates with ENC1 during neuronal differentiation, while hyperphosphorylated RB1 associates with ENC1 in undifferentiating cells. Part of a complex that contains CUL3, RBX1 and ENC1. Interacts indirectly with KEAP1. Post-translationally, ubiquitinated by E3 ubiquitin ligase complex formed by CUL3 and RBX1 and probably targeted for proteasome-independent degradation. Quinone-induced oxidative stress increases its ubiquitination. As to expression, primarily expressed in the nervous system.

Its subcellular location is the nucleus matrix. It is found in the cytoplasm. The protein localises to the cytoskeleton. Actin-binding protein involved in the regulation of neuronal process formation and in differentiation of neural crest cells. Down-regulates transcription factor NF2L2/NRF2 by decreasing the rate of protein synthesis and not via a ubiquitin-mediated proteasomal degradation mechanism. The sequence is that of Ectoderm-neural cortex protein 1 (Enc1) from Mus musculus (Mouse).